The chain runs to 362 residues: S-adenosylmethionine decarboxylase proenzyme 2 (362 aa).

Residues glutamate 9 and glutamate 12 contribute to the active site. Substrate is bound at residue glutamate 68. The Schiff-base intermediate with substrate; via pyruvic acid role is filled by serine 69. Serine 69 carries the pyruvic acid (Ser); by autocatalysis modification. Cysteine 83 (proton donor; for catalytic activity) is an active-site residue. Catalysis depends on proton acceptor; for processing activity residues serine 232 and histidine 245. Glutamate 249 provides a ligand contact to substrate.

Belongs to the eukaryotic AdoMetDC family. It depends on pyruvate as a cofactor. In terms of processing, is synthesized initially as an inactive proenzyme. Formation of the active enzyme involves a self-maturation process in which the active site pyruvoyl group is generated from an internal serine residue via an autocatalytic post-translational modification. Two non-identical subunits are generated from the proenzyme in this reaction, and the pyruvate is formed at the N-terminus of the alpha chain, which is derived from the carboxyl end of the proenzyme. The post-translation cleavage follows an unusual pathway, termed non-hydrolytic serinolysis, in which the side chain hydroxyl group of the serine supplies its oxygen atom to form the C-terminus of the beta chain, while the remainder of the serine residue undergoes an oxidative deamination to produce ammonia and the pyruvoyl group blocking the N-terminus of the alpha chain.

It carries out the reaction S-adenosyl-L-methionine + H(+) = S-adenosyl 3-(methylsulfanyl)propylamine + CO2. The protein operates within amine and polyamine biosynthesis; S-adenosylmethioninamine biosynthesis; S-adenosylmethioninamine from S-adenosyl-L-methionine: step 1/1. Functionally, essential for biosynthesis of the polyamines spermidine and spermine. Essential for polyamine homeostasis, and normal plant embryogenesis, growth and development. In Arabidopsis thaliana (Mouse-ear cress), this protein is S-adenosylmethionine decarboxylase proenzyme 2.